Consider the following 284-residue polypeptide: 2-dehydro-3-deoxyphosphooctonate aldolase (284 aa).

This sequence belongs to the KdsA family.

It localises to the cytoplasm. The enzyme catalyses D-arabinose 5-phosphate + phosphoenolpyruvate + H2O = 3-deoxy-alpha-D-manno-2-octulosonate-8-phosphate + phosphate. It participates in carbohydrate biosynthesis; 3-deoxy-D-manno-octulosonate biosynthesis; 3-deoxy-D-manno-octulosonate from D-ribulose 5-phosphate: step 2/3. It functions in the pathway bacterial outer membrane biogenesis; lipopolysaccharide biosynthesis. The chain is 2-dehydro-3-deoxyphosphooctonate aldolase from Serratia proteamaculans (strain 568).